The primary structure comprises 47 residues: Delta-actitoxin-Ael1b (47 aa).

3 disulfide bridges follow: C4–C44, C6–C34, and C27–C45.

Belongs to the sea anemone sodium channel inhibitory toxin family. Type I subfamily.

It localises to the secreted. It is found in the nematocyst. In terms of biological role, produces a positive inotropic effect in mammalian heart muscle. Modifies current passing through the fast sodium channel (Nav) in neuroblastoma cells, leading to delayed and incomplete inactivation. Paralyzes the shore crab (C.maenas) by tetanic contractions after intramuscular injection. The sequence is that of Delta-actitoxin-Ael1b from Anthopleura elegantissima (Green aggregating anemone).